Reading from the N-terminus, the 231-residue chain is Large ribosomal subunit protein uL1 (231 aa).

This sequence belongs to the universal ribosomal protein uL1 family. Part of the 50S ribosomal subunit.

In terms of biological role, binds directly to 23S rRNA. The L1 stalk is quite mobile in the ribosome, and is involved in E site tRNA release. Protein L1 is also a translational repressor protein, it controls the translation of the L11 operon by binding to its mRNA. The sequence is that of Large ribosomal subunit protein uL1 from Janthinobacterium sp. (strain Marseille) (Minibacterium massiliensis).